We begin with the raw amino-acid sequence, 425 residues long: Serine--tRNA ligase (425 aa).

233-235 (TAE) is an L-serine binding site. 264–266 (RRE) is a binding site for ATP. L-serine is bound at residue glutamate 287. Residue 351–354 (EISS) coordinates ATP. Serine 385 serves as a coordination point for L-serine.

Belongs to the class-II aminoacyl-tRNA synthetase family. Type-1 seryl-tRNA synthetase subfamily. Homodimer. The tRNA molecule binds across the dimer.

It localises to the cytoplasm. It catalyses the reaction tRNA(Ser) + L-serine + ATP = L-seryl-tRNA(Ser) + AMP + diphosphate + H(+). The enzyme catalyses tRNA(Sec) + L-serine + ATP = L-seryl-tRNA(Sec) + AMP + diphosphate + H(+). Its pathway is aminoacyl-tRNA biosynthesis; selenocysteinyl-tRNA(Sec) biosynthesis; L-seryl-tRNA(Sec) from L-serine and tRNA(Sec): step 1/1. In terms of biological role, catalyzes the attachment of serine to tRNA(Ser). Is also able to aminoacylate tRNA(Sec) with serine, to form the misacylated tRNA L-seryl-tRNA(Sec), which will be further converted into selenocysteinyl-tRNA(Sec). This chain is Serine--tRNA ligase, found in Synechococcus sp. (strain WH7803).